The sequence spans 154 residues: Superoxide dismutase [Cu-Zn] (154 aa).

His-47, His-49, and His-64 together coordinate Cu cation. The cysteines at positions 58 and 147 are disulfide-linked. Zn(2+)-binding residues include His-64, His-72, His-81, and Asp-84. His-121 is a Cu cation binding site. The segment at 122–143 (GGTDDLGKGGNEESLKTGNAGP) is disordered. Basic and acidic residues predominate over residues 123–136 (GTDDLGKGGNEESL). Residue Arg-144 participates in substrate binding.

This sequence belongs to the Cu-Zn superoxide dismutase family. Homodimer. Cu cation is required as a cofactor. It depends on Zn(2+) as a cofactor.

The protein localises to the cytoplasm. It carries out the reaction 2 superoxide + 2 H(+) = H2O2 + O2. In terms of biological role, destroys radicals which are normally produced within the cells and which are toxic to biological systems. The chain is Superoxide dismutase [Cu-Zn] (SOD1) from Cordyceps militaris (Caterpillar fungus).